The primary structure comprises 1409 residues: Receptor-type tyrosine-protein phosphatase (1409 aa).

The signal sequence occupies residues 1 to 22; that stretch reads MRINRWIWWATVILLYLRTGLA. At 23 to 712 the chain is on the extracellular side; sequence ADFFRSSEEN…LLDTESSSSG (690 aa). A disordered region spans residues 32 to 53; it reads NDRKSSDDLDNFNSTKIEPDKP. Residues 159–267 enclose the Ig-like C2-type domain; it reads PTKCDKRDLA…TASASDLDVT (109 aa). Cysteines 189 and 255 form a disulfide. Fibronectin type-III domains follow at residues 276-366 and 372-502; these read APRQ…TKQK and KEED…AQPD. A helical transmembrane segment spans residues 713 to 733; it reads FGIFMKIILPFLLFLAFATGV. Residues 734-1409 are Cytoplasmic-facing; it reads TMFFVNRKGH…LADYISKTYR (676 aa). Tyrosine-protein phosphatase domains are found at residues 793 to 1072 and 1135 to 1403; these read FAQE…LAEW and LEEE…LADY. Catalysis depends on phosphocysteine intermediate residues cysteine 1013 and cysteine 1344.

It belongs to the protein-tyrosine phosphatase family. Receptor class 2A subfamily. Expressed in muscles, hypodermis and a subset of neurons. Expressed in the AVA neurons, with high expression in the anterior half of the preanal ganglion where AVA neurons contact the PHB neurons.

The protein localises to the cell membrane. The protein resides in the synapse. The enzyme catalyses O-phospho-L-tyrosyl-[protein] + H2O = L-tyrosyl-[protein] + phosphate. Functionally, possesses an intrinsic protein tyrosine phosphatase (PTPase) activity. Regulates egl-15 activity which is required for hypodermis-mediated fluid homeostasis and protein degradation in muscle. During the formation of neuromuscular junctions at the larval stage, negatively regulates membrane protrusion from body wall muscles. Plays a role in nicotinic acetylcholine receptor (nAChR)-mediated sensitivity to nicotine. Regulates synaptic levels of nAchR subunit lev-1 in the nerve cord. Promotes the outgrowth of the quaternary dendritic branches of the PVD sensory neurons. In parallel to the sax-7/mnr-1 pathway, also controls the extension of the PVD primary branches. Acts in the netrin/DCC pathway to mediate the formation of synapses between the AVA interneurons and the PHB sensory neurons. Also required for the formation of synapses between the AVA interneurons and the VA10 motor neurons. In Caenorhabditis elegans, this protein is Receptor-type tyrosine-protein phosphatase.